We begin with the raw amino-acid sequence, 326 residues long: AETTAPSVYPLAPGTALKSNSMVTLGCLVKGYFPEPVTVTWNSGALSSGVHTFPAVLQSGLYTLTSSVTVPSSTWPSQTVTCNVAHPASSTKVDKKIVPRNCGGDCKPCICTGSEVSSVFIFPPKPKDVLTITLTPKVTCVVVDISQDDPEVHFSWFVDDVEVHTAQTRPPEEQFNSTFRSVSELPILHQDWLNGRTFRCKVTSAAFPSPIEKTISKPEGRTQVPHVYTMSPTKEEMTQNEVSITCMVKGFYPPDIYVEWQMNGQPQENYKNTPPTMDTDGSYFLYSKLNVKKEKWQQGNTFTCSVLHEGLHNHHTEKSLSHSPGK.

The interval 1-97 (AETTAPSVYP…ASSTKVDKKI (97 aa)) is CH1. An intrachain disulfide couples cysteine 27 to cysteine 82. Residues 98–112 (VPRNCGGDCKPCICT) form a hinge region. The segment at 113 to 219 (GSEVSSVFIF…PIEKTISKPE (107 aa)) is CH2. Cystine bridges form between cysteine 140–cysteine 200 and cysteine 246–cysteine 304. The N-linked (GlcNAc...) asparagine glycan is linked to asparagine 176. Residues 220 to 326 (GRTQVPHVYT…EKSLSHSPGK (107 aa)) are CH3.

In Rattus norvegicus (Rat), this protein is Ig gamma-1 chain C region.